We begin with the raw amino-acid sequence, 124 residues long: Small ribosomal subunit protein uS12 (124 aa).

The residue at position 89 (aspartate 89) is a 3-methylthioaspartic acid. Residues 103–124 (DTAGVQNRNRGRSKYGAKRPKK) are disordered. Basic residues predominate over residues 111 to 124 (NRGRSKYGAKRPKK).

Belongs to the universal ribosomal protein uS12 family. In terms of assembly, part of the 30S ribosomal subunit. Contacts proteins S8 and S17. May interact with IF1 in the 30S initiation complex.

In terms of biological role, with S4 and S5 plays an important role in translational accuracy. Functionally, interacts with and stabilizes bases of the 16S rRNA that are involved in tRNA selection in the A site and with the mRNA backbone. Located at the interface of the 30S and 50S subunits, it traverses the body of the 30S subunit contacting proteins on the other side and probably holding the rRNA structure together. The combined cluster of proteins S8, S12 and S17 appears to hold together the shoulder and platform of the 30S subunit. This chain is Small ribosomal subunit protein uS12, found in Desulforudis audaxviator (strain MP104C).